Reading from the N-terminus, the 64-residue chain is Large ribosomal subunit protein bL33 (64 aa).

The protein belongs to the bacterial ribosomal protein bL33 family.

In Synechococcus sp. (strain JA-3-3Ab) (Cyanobacteria bacterium Yellowstone A-Prime), this protein is Large ribosomal subunit protein bL33.